The following is a 253-amino-acid chain: MSKSDVFHLGLTKNDLQGATLAIVPGDPDRVEKIAALMDKPVKLASHREFTTWRAELDGKPVIVCSTGIGGPSTSIAVEELAQLGIRTFLRIGTTGAIQPHINVGDVLVTTASVRLDGASLHFAPLEFPAVADFECTTALVEAAKSIGATTHVGVTASSDTFYPGQERYDTYSGRVVRHFKGSMEEWQAMGVMNYEMESATLLTMCASQGLRAGMVAGVIVNRTQQEIPNAETMKQTESHAVKIVVEAARRLL.

The protein belongs to the PNP/UDP phosphorylase family. Homohexamer.

It is found in the cytoplasm. The enzyme catalyses uridine + phosphate = alpha-D-ribose 1-phosphate + uracil. Its pathway is pyrimidine metabolism; UMP biosynthesis via salvage pathway; uracil from uridine (phosphorylase route): step 1/1. Functionally, catalyzes the reversible phosphorylytic cleavage of uridine to uracil and ribose-1-phosphate. Shows weak activity towards deoxyuridine and thymidine. The produced molecules are then utilized as carbon and energy sources or in the rescue of pyrimidine bases for nucleotide synthesis. The sequence is that of Uridine phosphorylase from Escherichia coli (strain K12).